The primary structure comprises 116 residues: Dynein light chain Tctex-type 3 (116 aa).

Tyr-4 carries the post-translational modification 3'-nitrotyrosine.

Belongs to the dynein light chain Tctex-type family. In terms of assembly, homodimer. The cytoplasmic dynein 1 complex consists of two catalytic heavy chains (HCs) and a number of non-catalytic subunits presented by intermediate chains (ICs), light intermediate chains (LICs) and light chains (LCs); the composition seems to vary in respect to the IC, LIC and LC composition. The heavy chain homodimer serves as a scaffold for the probable homodimeric assembly of the respective non-catalytic subunits. The ICs and LICs bind directly to the HC dimer and the LCs assemble on the IC dimer. DYNLT1 and DYNLT3 compete for association with dynein IC (DYNC1I1 or DYNC1I2). Self-associates. Interacts with DYNC1I1 and DYNC1I2. Interacts with BUB3. Interacts with SATB1 in nucleus to form complex with matrix attachment regions (MARs) of DNA.

It localises to the nucleus. Its subcellular location is the cytoplasm. The protein localises to the cytoskeleton. The protein resides in the chromosome. It is found in the centromere. It localises to the kinetochore. Functionally, acts as one of several non-catalytic accessory components of the cytoplasmic dynein 1 complex that are thought to be involved in linking dynein to cargos and to adapter proteins that regulate dynein function. Cytoplasmic dynein 1 acts as a motor for the intracellular retrograde motility of vesicles and organelles along microtubules. Probably binds BUB3 as part of transport cargo. Required for the efficient progression through mitosis. In Mus musculus (Mouse), this protein is Dynein light chain Tctex-type 3 (Dynlt3).